The following is a 228-amino-acid chain: Ribose-5-phosphate isomerase A (228 aa).

Substrate-binding positions include 28–31 (TGST), 84–87 (DGAD), and 97–100 (KGGG). The active-site Proton acceptor is the Glu106. Residue Lys124 participates in substrate binding.

This sequence belongs to the ribose 5-phosphate isomerase family. In terms of assembly, homodimer.

The enzyme catalyses aldehydo-D-ribose 5-phosphate = D-ribulose 5-phosphate. It functions in the pathway carbohydrate degradation; pentose phosphate pathway; D-ribose 5-phosphate from D-ribulose 5-phosphate (non-oxidative stage): step 1/1. In terms of biological role, catalyzes the reversible conversion of ribose-5-phosphate to ribulose 5-phosphate. The sequence is that of Ribose-5-phosphate isomerase A from Levilactobacillus brevis (strain ATCC 367 / BCRC 12310 / CIP 105137 / JCM 1170 / LMG 11437 / NCIMB 947 / NCTC 947) (Lactobacillus brevis).